A 447-amino-acid chain; its full sequence is Tubulin alpha-1 chain (447 aa).

The GTP site is built by Gln-11, Glu-72, Ser-141, Gly-145, Thr-146, Thr-180, Asn-207, and Asn-229. Glu-72 lines the Mg(2+) pocket. The active site involves Glu-255.

Belongs to the tubulin family. As to quaternary structure, dimer of alpha and beta chains. A typical microtubule is a hollow water-filled tube with an outer diameter of 25 nm and an inner diameter of 15 nM. Alpha-beta heterodimers associate head-to-tail to form protofilaments running lengthwise along the microtubule wall with the beta-tubulin subunit facing the microtubule plus end conferring a structural polarity. Microtubules usually have 13 protofilaments but different protofilament numbers can be found in some organisms and specialized cells. Mg(2+) serves as cofactor.

It is found in the cytoplasm. It localises to the cytoskeleton. It catalyses the reaction GTP + H2O = GDP + phosphate + H(+). Functionally, tubulin is the major constituent of microtubules, a cylinder consisting of laterally associated linear protofilaments composed of alpha- and beta-tubulin heterodimers. Microtubules grow by the addition of GTP-tubulin dimers to the microtubule end, where a stabilizing cap forms. Below the cap, tubulin dimers are in GDP-bound state, owing to GTPase activity of alpha-tubulin. The polypeptide is Tubulin alpha-1 chain (TUB1) (Saccharomyces cerevisiae (strain ATCC 204508 / S288c) (Baker's yeast)).